The sequence spans 431 residues: PHD finger-containing protein 1 (431 aa).

The PHD-type zinc finger occupies 7-59 (GPVCQTCGDIGFEEALVFCDSCMFESIHRYCLGITPIPFTEYITWICEDCDNS). Positions 10, 13, 25, 28, 34, 37, 53, and 56 each coordinate Zn(2+). Positions 125-221 (EAADSSSVPD…QESSDSRKPH (97 aa)) are disordered. Polar residues predominate over residues 128–139 (DSSSVPDHSSCT). Over residues 160–171 (KKKKKKKKKKSI) the composition is skewed to basic residues. Low complexity predominate over residues 191–202 (VVEPVEVSSSSP). Residues 205 to 221 (ETMESKRQESSDSRKPH) show a composition bias toward basic and acidic residues.

Interacts directly with AIPP3/BDT1.

In terms of biological role, together with AIPP3/BDT1, cooperates to form a BAH-PHD bivalent histone reader complex able to read histone H3 lysine 27 trimethylation (H3K27me3) histone marks in order to regulate transcription, especially to prevent early flowering; promotes AIPP3/BDT1 binding to H3K27me3. This is PHD finger-containing protein 1 from Arabidopsis thaliana (Mouse-ear cress).